We begin with the raw amino-acid sequence, 457 residues long: uncharacterized protein (457 aa).

The 59-residue stretch at 5–63 (PVEEGQKFPLTIRRMGINGEGIGYFKKAVVFVPGAITGEEVVVEAVKVRDRFTEAKLNK) folds into the TRAM domain. Positions 76, 82, 85, and 166 each coordinate [4Fe-4S] cluster. The S-adenosyl-L-methionine site is built by glutamine 290, tyrosine 319, aspartate 340, and aspartate 388. The Nucleophile role is filled by cysteine 415.

The protein belongs to the class I-like SAM-binding methyltransferase superfamily. RNA M5U methyltransferase family.

This is an uncharacterized protein from Listeria innocua serovar 6a (strain ATCC BAA-680 / CLIP 11262).